Here is a 315-residue protein sequence, read N- to C-terminus: Methionyl-tRNA formyltransferase (315 aa).

113-116 serves as a coordination point for (6S)-5,6,7,8-tetrahydrofolate; the sequence is SILP.

The protein belongs to the Fmt family.

The catalysed reaction is L-methionyl-tRNA(fMet) + (6R)-10-formyltetrahydrofolate = N-formyl-L-methionyl-tRNA(fMet) + (6S)-5,6,7,8-tetrahydrofolate + H(+). Its function is as follows. Attaches a formyl group to the free amino group of methionyl-tRNA(fMet). The formyl group appears to play a dual role in the initiator identity of N-formylmethionyl-tRNA by promoting its recognition by IF2 and preventing the misappropriation of this tRNA by the elongation apparatus. This Vibrio vulnificus (strain YJ016) protein is Methionyl-tRNA formyltransferase.